The chain runs to 208 residues: Thymidylate kinase (208 aa).

7-14 (GIDGAGKT) contributes to the ATP binding site.

It belongs to the thymidylate kinase family.

It catalyses the reaction dTMP + ATP = dTDP + ADP. In terms of biological role, phosphorylation of dTMP to form dTDP in both de novo and salvage pathways of dTTP synthesis. This chain is Thymidylate kinase, found in Xylella fastidiosa (strain Temecula1 / ATCC 700964).